Here is a 386-residue protein sequence, read N- to C-terminus: Antilisterial bacteriocin subtilosin biosynthesis protein AlbE (386 aa).

In terms of biological role, involved in the production of the bacteriocin subtilosin. The protein is Antilisterial bacteriocin subtilosin biosynthesis protein AlbE (albE) of Bacillus subtilis (strain 168).